We begin with the raw amino-acid sequence, 1081 residues long: DNA polymerase delta catalytic subunit (1081 aa).

The interval 1–22 (MTSKRPGGSSFQPEVKRKRESD) is disordered. Zn(2+) contacts are provided by Cys981, Cys984, Cys998, and Cys1001. Residues 981–1001 (CLGCKSVLPRAESENAVCKHC) form a CysA-type zinc finger. Residues Cys1030, Cys1033, Cys1043, and Cys1048 each contribute to the [4Fe-4S] cluster site. Residues 1030–1048 (CQNCAKTMQDKVNCSARDC) carry the CysB motif motif.

The protein belongs to the DNA polymerase type-B family. As to quaternary structure, heterodimer with subunits of 125 kDa and 50 kDa. The 125 kDa subunit contains the polymerase active site and most likely the active site for the 3'-5' exonuclease activity. [4Fe-4S] cluster is required as a cofactor.

Its subcellular location is the nucleus. The enzyme catalyses DNA(n) + a 2'-deoxyribonucleoside 5'-triphosphate = DNA(n+1) + diphosphate. In terms of biological role, possesses two enzymatic activities: DNA synthesis (polymerase) and an exonucleolytic activity that degrades single stranded DNA in the 3'- to 5'-direction. Required with its accessory proteins (proliferating cell nuclear antigen (PCNA) and replication factor C (RFC) or activator 1) for leading strand synthesis. Also involved in completing Okazaki fragments initiated by the DNA polymerase alpha/primase complex. The sequence is that of DNA polymerase delta catalytic subunit from Caenorhabditis elegans.